We begin with the raw amino-acid sequence, 316 residues long: Malate dehydrogenase (316 aa).

Residues 12 to 17 and Asp-36 each bind NAD(+); that span reads GAGNIG. Substrate-binding residues include Arg-85 and Arg-91. NAD(+) is bound by residues Asn-98 and 121–123; that span reads VTN. Residues Asn-123 and Arg-154 each coordinate substrate. The active-site Proton acceptor is the His-178.

It belongs to the LDH/MDH superfamily. MDH type 3 family.

It carries out the reaction (S)-malate + NAD(+) = oxaloacetate + NADH + H(+). Its function is as follows. Catalyzes the reversible oxidation of malate to oxaloacetate. This Wolbachia sp. subsp. Brugia malayi (strain TRS) protein is Malate dehydrogenase.